The chain runs to 412 residues: Zinc finger protein 821 (412 aa).

Positions 26 to 83 (RQAMMKTDFPGDLGSQRQAIQQLRDQDSSSSDSEGDEEETTQDEVSSHTSEEDGGVVK) are disordered. Over residues 58–67 (SEGDEEETTQ) the composition is skewed to acidic residues. C2H2-type zinc fingers lie at residues 116–140 (GLCQ…VYQH) and 150–172 (YMCP…LLIH). A coiled-coil region spans residues 257 to 366 (KWALRRQNEP…EKMDMMLRAQ (110 aa)). Positions 278–319 (RTAKKSRRDNETPEEREVRRMRDREAKRLQRMQETDEQRARR) are disordered.

The protein belongs to the krueppel C2H2-type zinc-finger protein family.

Its subcellular location is the nucleus. Functionally, may be involved in transcriptional regulation. The polypeptide is Zinc finger protein 821 (ZNF821) (Bos taurus (Bovine)).